Reading from the N-terminus, the 1717-residue chain is MSGTSSPEAVKKLLENMQSDLRALSLECKKKFPPVKEAAESGIIKVKTIAARNTEILAALKENSSEVVQPFLMGCGTKEPKITQLCLAAIQRLMSHEVVSETAAGNIINMLWQLMENSLEELKLLQTVLVLLTTNTVVHDEALSKAIVLCFRLHFTKDNITNNTAAATVRQVVTVVFERMVAEDERHRDIIEQPVLVQGNSNRRSVSTLKPCAKDAYMLFQDLCQLVNADAPYWLVGMTEMTRTFGLELLESVLNDFPQVFLQHQEFSFLLKERVCPLVIKLFSPNIKFRQGSSTSSSPAPVEKPYFPICMRLLRVVSVLIKQFYSLLVTECEIFLSLLVKFLDADKPQWLRAVAVESIHRFCVQPQLLRSFCQSYDMKQHSTKVFRDIVNALGSFIQSLFLVPPTGNPATSNQAGNNNLGGSVSAPANSGMVGIGGGVTLLPAFEYRGTWIPILTITVQGSAKATYLEMLDKVEPPTIPEGYAMSVAFHCLLDLVRGITSMIEGELGELETECQTTTEEGSSPTQSTEQQDLQSTSDQMDKEIVSRAVWEEMVNACWCGLLAALSLLLDASTDEAATENILKAELTMAALCGRLGLVTSRDAFITAICKGSLPPHYALTVLNTTTAATLSNKSYSVQGQSVMMISPSSESHQQVVAVGQPLAVQPQGTVMLTSKNIQCMRTLLNLAHCHGAVLGTSWQLVLATLQHLVWILGLKPSSGGALKPGRAVEGPSTVLTTAVMTDLPVISNILSRLFESSQYLDDVSLHHLINALCSLSLEAMDMAYGNNKEPSLFAVAKLLETGLVNMHRIEILWRPLTGHLLEVCQHPNSRMREWGAEALTSLIKAGLTFNHDPPLSQNQRLQLLLLNPLKEMSNINHPDIRLKQLECVLQILQSQGDSLGPGWPLVLGVMGAIRNDQGESLIRTAFQCLQLVVTDFLPTMPCTCLQIVVDVAGSFGLHNQELNISLTSIGLLWNISDYFFQRGETIEKELNKEEAAQQKQAEEKGVVLNRPFHPAPPFDCLWLCLYAKLGELCVDPRPAVRKSAGQTLFSTIGAHGTLLQHSTWHTVIWKVLFHLLDRVRESSTTADKEKIESGGGNILIHHSRDTAEKQWAETWVLTLAGVARIFNTRRYLLQPLGDFSRAWDVLLDHIQSAALSKNNEVSLAALKSFQEILQIVSPVRDSDKPETPPVVNVPVPVLIGPISGMSRPFVRTDSIGEKLGRYSSSEPPIVTDELEDLNLWWAAWNTWYRIGSESTKPPITFDKLTFIPSQPFLTALIQIFPALYQHIKTGFNMDDLQKLGVILHSAISVPISSDASPFILPSYTEAVLTSLQEAVLTALDVLQKAICVGPENMQIMYPAIFDQLLAFVEFSCKPPQYGQLETKHIANAKYNQIQLFAPAEWVALNYVPFAERSLEVVVDLYQKTACHKAVVNEKVLQNIIKTLRVPLSLKYSCPSESTWKLAVSSLLRVLSIGLPVARQHASSGKFDSMWPELANTFEDFLFTKSIPPDNLSIQEFQRNENIDVEVVQLISNEILPYANFIPKEFVGQIMTMLNKGSIHSQSSSFTEAEIDIRLREEFSKMCFETLLQFSFSNKVTTPQEGYISRMALSVLLKRSQDVLHRYIEDERLSGKCPLPRQQVTEIIFVLKAVSTLIDSLKKTQPENVDGNTWAQVIALYPTLVECITCSSSEVCSALKEALVPFKDFMQPPASRVQNGES.

At Ser-2 the chain carries N-acetylserine. Phosphoserine is present on residues Ser-205 and Ser-537. Residues 511-538 (ETECQTTTEEGSSPTQSTEQQDLQSTSD) are disordered. Residues 522-538 (SSPTQSTEQQDLQSTSD) are compositionally biased toward polar residues.

This sequence belongs to the MON2 family. Homooligomer. Heterotrimer with ATP9A and DOP1B; this interaction is retromer-independent. Interacts with SNX3.

Its subcellular location is the early endosome membrane. Functionally, plays a role in regulating membrane trafficking of cargo proteins. Together with ATP9A and DOP1B, regulates SNX3 retromer-mediated endosomal sorting of WLS away from lysosomal degradation. This chain is Protein MON2 homolog, found in Homo sapiens (Human).